The chain runs to 218 residues: Structural protein V19 (218 aa).

Its subcellular location is the virion. The protein is Structural protein V19 of Sputnik virophage.